We begin with the raw amino-acid sequence, 294 residues long: N-acetylmuramic acid 6-phosphate etherase (294 aa).

The 164-residue stretch at 56–219 (TSYSLRNGGR…STLSMVSVGK (164 aa)) folds into the SIS domain. The active-site Proton donor is the Glu-84. Glu-115 is an active-site residue.

This sequence belongs to the GCKR-like family. MurNAc-6-P etherase subfamily. Homodimer.

It carries out the reaction N-acetyl-D-muramate 6-phosphate + H2O = N-acetyl-D-glucosamine 6-phosphate + (R)-lactate. The protein operates within amino-sugar metabolism; 1,6-anhydro-N-acetylmuramate degradation. It functions in the pathway amino-sugar metabolism; N-acetylmuramate degradation. Its pathway is cell wall biogenesis; peptidoglycan recycling. In terms of biological role, specifically catalyzes the cleavage of the D-lactyl ether substituent of MurNAc 6-phosphate, producing GlcNAc 6-phosphate and D-lactate. Together with AnmK, is also required for the utilization of anhydro-N-acetylmuramic acid (anhMurNAc) either imported from the medium or derived from its own cell wall murein, and thus plays a role in cell wall recycling. This is N-acetylmuramic acid 6-phosphate etherase from Francisella tularensis subsp. holarctica (strain LVS).